We begin with the raw amino-acid sequence, 146 residues long: [Ribosomal protein bS18]-alanine N-acetyltransferase (146 aa).

The region spanning 2-146 (SIISQIEACD…ENAVVMACYL (145 aa)) is the N-acetyltransferase domain. Acetyl-CoA is bound at residue 69-71 (IAI). Residue E103 is the Proton acceptor of the active site. Residue N108 participates in acetyl-CoA binding. Y114 serves as the catalytic Proton donor.

This sequence belongs to the acetyltransferase family. RimI subfamily.

The protein localises to the cytoplasm. It carries out the reaction N-terminal L-alanyl-[ribosomal protein bS18] + acetyl-CoA = N-terminal N(alpha)-acetyl-L-alanyl-[ribosomal protein bS18] + CoA + H(+). In terms of biological role, acetylates the N-terminal alanine of ribosomal protein bS18. In Haemophilus influenzae (strain ATCC 51907 / DSM 11121 / KW20 / Rd), this protein is [Ribosomal protein bS18]-alanine N-acetyltransferase.